We begin with the raw amino-acid sequence, 66 residues long: Putative transmembrane protein ORF66 (66 aa).

Over 1–6 the chain is Cytoplasmic; that stretch reads MSDVDD. Residues 7–27 form a helical membrane-spanning segment; it reads TIVDSIAIVGAILIGIFLIVV. Residues 28–39 are Extracellular-facing; it reads SVSNTSLFNNTE. A helical transmembrane segment spans residues 40–60; the sequence is YDSMINSVLVIISSVIAYTLG. Residues 61–66 lie on the Cytoplasmic side of the membrane; it reads KRRSKS.

The protein resides in the host membrane. The sequence is that of Putative transmembrane protein ORF66 from Acidianus filamentous virus 2 (isolate Italy/Pozzuoli) (AFV-2).